A 190-amino-acid polypeptide reads, in one-letter code: Threonylcarbamoyl-AMP synthase (190 aa).

The 184-residue stretch at 7–190 folds into the YrdC-like domain; sequence TGSIAAAVDL…ALTGELFRQG (184 aa).

This sequence belongs to the SUA5 family. TsaC subfamily.

The protein localises to the cytoplasm. It catalyses the reaction L-threonine + hydrogencarbonate + ATP = L-threonylcarbamoyladenylate + diphosphate + H2O. Required for the formation of a threonylcarbamoyl group on adenosine at position 37 (t(6)A37) in tRNAs that read codons beginning with adenine. Catalyzes the conversion of L-threonine, HCO(3)(-)/CO(2) and ATP to give threonylcarbamoyl-AMP (TC-AMP) as the acyladenylate intermediate, with the release of diphosphate. This chain is Threonylcarbamoyl-AMP synthase, found in Salmonella choleraesuis (strain SC-B67).